The sequence spans 244 residues: 5-oxoprolinase subunit A (244 aa).

The protein belongs to the LamB/PxpA family. As to quaternary structure, forms a complex composed of PxpA, PxpB and PxpC.

It catalyses the reaction 5-oxo-L-proline + ATP + 2 H2O = L-glutamate + ADP + phosphate + H(+). In terms of biological role, catalyzes the cleavage of 5-oxoproline to form L-glutamate coupled to the hydrolysis of ATP to ADP and inorganic phosphate. In Salmonella schwarzengrund (strain CVM19633), this protein is 5-oxoprolinase subunit A.